Here is a 275-residue protein sequence, read N- to C-terminus: Dermonecrotic toxin SpeSicTox-betaIIA3ii (275 aa).

The active site involves histidine 5. Positions 25 and 27 each coordinate Mg(2+). The Nucleophile role is filled by histidine 41. Intrachain disulfides connect cysteine 45/cysteine 51 and cysteine 47/cysteine 190. Aspartate 85 contacts Mg(2+).

It belongs to the arthropod phospholipase D family. Class II subfamily. Requires Mg(2+) as cofactor. In terms of tissue distribution, expressed by the venom gland.

The protein localises to the secreted. The enzyme catalyses an N-(acyl)-sphingosylphosphocholine = an N-(acyl)-sphingosyl-1,3-cyclic phosphate + choline. It catalyses the reaction an N-(acyl)-sphingosylphosphoethanolamine = an N-(acyl)-sphingosyl-1,3-cyclic phosphate + ethanolamine. The catalysed reaction is a 1-acyl-sn-glycero-3-phosphocholine = a 1-acyl-sn-glycero-2,3-cyclic phosphate + choline. It carries out the reaction a 1-acyl-sn-glycero-3-phosphoethanolamine = a 1-acyl-sn-glycero-2,3-cyclic phosphate + ethanolamine. In terms of biological role, dermonecrotic toxins cleave the phosphodiester linkage between the phosphate and headgroup of certain phospholipids (sphingolipid and lysolipid substrates), forming an alcohol (often choline) and a cyclic phosphate. This toxin acts on sphingomyelin (SM). It may also act on ceramide phosphoethanolamine (CPE), lysophosphatidylcholine (LPC) and lysophosphatidylethanolamine (LPE), but not on lysophosphatidylserine (LPS), and lysophosphatidylglycerol (LPG). It acts by transphosphatidylation, releasing exclusively cyclic phosphate products as second products. Induces dermonecrosis, hemolysis, increased vascular permeability, edema, inflammatory response, and platelet aggregation. In Sicarius peruensis (Six-eyed sand spider), this protein is Dermonecrotic toxin SpeSicTox-betaIIA3ii.